A 349-amino-acid polypeptide reads, in one-letter code: Replication-associated protein (349 aa).

The CRESS-DNA virus Rep endonuclease domain occupies 9 to 118 (RLAARNIFLT…DGDYCESGQY (110 aa)). The RCR-1 signature appears at 16–19 (FLTY). Positions 51, 59, and 61 each coordinate a divalent metal cation. The short motif at 59–61 (HLH) is the RCR-2 element. Catalysis depends on Tyr105, which acts as the For DNA cleavage activity. Residues 105–108 (YITK) carry the RCR-3 motif. Asp109 contributes to the a divalent metal cation binding site. Positions 141–151 (VEEALAIIRAG) are binding to RBR1. The tract at residues 154-174 (KTFIVSYHNVRANIERLFTKA) is oligomerization. 220–227 (GDSRTGKT) lines the ATP pocket.

The protein belongs to the geminiviridae Rep protein family. In terms of assembly, homooligomer. Interacts with the replication enhancer protein (REn). Interacts with host retinoblastoma-related protein 1 (RBR1), and may thereby induce the transcription of host replicative enzymes even if the cell is not dividing anymore. Interacts with host PCNA. Interacts with host SCE1 protein. The cofactor is Mg(2+). Mn(2+) is required as a cofactor.

The protein resides in the host nucleus. Its function is as follows. Essential for the replication of viral ssDNA. The closed circular ssDNA genome is first converted to a superhelical dsDNA. Rep binds a specific region at the genome origin of replication. It introduces an endonucleolytic nick within the conserved sequence 5'-TAATATTAC-3' in the intergenic region of the genome present in all geminiviruses, thereby initiating the rolling circle replication (RCR). Following cleavage, binds covalently to the 5'-phosphate of DNA as a tyrosyl ester. The cleavage gives rise to a free 3'-OH that serves as a primer for the cellular DNA polymerase. The polymerase synthesizes the (+) strand DNA by rolling circle mechanism. After one round of replication, a Rep-catalyzed nucleotidyl transfer reaction releases a circular single-stranded virus genome, thereby terminating the replication. Displays origin-specific DNA cleavage, nucleotidyl transferase, ATPase and helicase activities. In Cabbage leaf curl virus (isolate Jamaica) (CaLCuV), this protein is Replication-associated protein.